A 108-amino-acid chain; its full sequence is Large ribosomal subunit protein uL24 (108 aa).

This sequence belongs to the universal ribosomal protein uL24 family. As to quaternary structure, part of the 50S ribosomal subunit.

In terms of biological role, one of two assembly initiator proteins, it binds directly to the 5'-end of the 23S rRNA, where it nucleates assembly of the 50S subunit. Its function is as follows. One of the proteins that surrounds the polypeptide exit tunnel on the outside of the subunit. The protein is Large ribosomal subunit protein uL24 of Mycoplasma genitalium (strain ATCC 33530 / DSM 19775 / NCTC 10195 / G37) (Mycoplasmoides genitalium).